The primary structure comprises 479 residues: Ribosomal RNA small subunit methyltransferase F (479 aa).

S-adenosyl-L-methionine is bound by residues 125 to 131 (AAAPGSK), Glu149, Asp176, and Asp194. Catalysis depends on Cys247, which acts as the Nucleophile.

The protein belongs to the class I-like SAM-binding methyltransferase superfamily. RsmB/NOP family.

The protein resides in the cytoplasm. The enzyme catalyses cytidine(1407) in 16S rRNA + S-adenosyl-L-methionine = 5-methylcytidine(1407) in 16S rRNA + S-adenosyl-L-homocysteine + H(+). Specifically methylates the cytosine at position 1407 (m5C1407) of 16S rRNA. In Salmonella paratyphi A (strain ATCC 9150 / SARB42), this protein is Ribosomal RNA small subunit methyltransferase F.